The primary structure comprises 257 residues: Type III pantothenate kinase (257 aa).

An ATP-binding site is contributed by D11 to K18. Substrate-binding positions include Y96 and G103–R106. D105 (proton acceptor) is an active-site residue. D125 is a binding site for K(+). Residue T128 coordinates ATP. T179 contributes to the substrate binding site.

This sequence belongs to the type III pantothenate kinase family. As to quaternary structure, homodimer. Requires NH4(+) as cofactor. K(+) is required as a cofactor.

Its subcellular location is the cytoplasm. It carries out the reaction (R)-pantothenate + ATP = (R)-4'-phosphopantothenate + ADP + H(+). It functions in the pathway cofactor biosynthesis; coenzyme A biosynthesis; CoA from (R)-pantothenate: step 1/5. Its function is as follows. Catalyzes the phosphorylation of pantothenate (Pan), the first step in CoA biosynthesis. This chain is Type III pantothenate kinase, found in Nitrosomonas eutropha (strain DSM 101675 / C91 / Nm57).